The sequence spans 801 residues: Endonuclease MutS2 (801 aa).

An ATP-binding site is contributed by 336–343; it reads GPNTGGKT. A disordered region spans residues 696 to 721; that stretch reads AQQSKAKQKQQKIVKTKTASGSARAT. Residues 701–710 are compositionally biased toward basic residues; that stretch reads AKQKQQKIVK. The region spanning 726-801 is the Smr domain; it reads LDLRGVRYEA…GDGATIAELS (76 aa).

Belongs to the DNA mismatch repair MutS family. MutS2 subfamily. As to quaternary structure, homodimer. Binds to stalled ribosomes, contacting rRNA.

Its function is as follows. Endonuclease that is involved in the suppression of homologous recombination and thus may have a key role in the control of bacterial genetic diversity. Acts as a ribosome collision sensor, splitting the ribosome into its 2 subunits. Detects stalled/collided 70S ribosomes which it binds and splits by an ATP-hydrolysis driven conformational change. Acts upstream of the ribosome quality control system (RQC), a ribosome-associated complex that mediates the extraction of incompletely synthesized nascent chains from stalled ribosomes and their subsequent degradation. Probably generates substrates for RQC. The protein is Endonuclease MutS2 of Leuconostoc citreum (strain KM20).